The following is a 37-amino-acid chain: Mating pheromone Er-20 (37 aa).

3 disulfide bridges follow: Cys-3–Cys-18, Cys-10–Cys-32, and Cys-15–Cys-24.

Homodimer.

The protein resides in the secreted. In terms of biological role, mating ciliate pheromones (or gamones) are diffusible extracellular communication signals that distinguish different intraspecific classes of cells commonly referred to as 'mating types'. They prepare the latter for conjugation by changing their cell surface properties. This Euplotes raikovi protein is Mating pheromone Er-20 (MAT20).